We begin with the raw amino-acid sequence, 117 residues long: Cell division protein FtsB (117 aa).

Residues methionine 1–tryptophan 6 lie on the Cytoplasmic side of the membrane. The helical transmembrane segment at methionine 7–phenylalanine 24 threads the bilayer. Over glycine 25–proline 117 the chain is Periplasmic. Residues serine 29 to alanine 69 are a coiled coil.

Belongs to the FtsB family. As to quaternary structure, part of a complex composed of FtsB, FtsL and FtsQ.

Its subcellular location is the cell inner membrane. Functionally, essential cell division protein. May link together the upstream cell division proteins, which are predominantly cytoplasmic, with the downstream cell division proteins, which are predominantly periplasmic. This is Cell division protein FtsB from Stenotrophomonas maltophilia (strain R551-3).